Consider the following 716-residue polypeptide: 1,4-alpha-glucan branching enzyme GlgB (716 aa).

The active-site Nucleophile is the Asp-399. The active-site Proton donor is the Glu-452.

The protein belongs to the glycosyl hydrolase 13 family. GlgB subfamily. Monomer.

The enzyme catalyses Transfers a segment of a (1-&gt;4)-alpha-D-glucan chain to a primary hydroxy group in a similar glucan chain.. Its pathway is glycan biosynthesis; glycogen biosynthesis. Its function is as follows. Catalyzes the formation of the alpha-1,6-glucosidic linkages in glycogen by scission of a 1,4-alpha-linked oligosaccharide from growing alpha-1,4-glucan chains and the subsequent attachment of the oligosaccharide to the alpha-1,6 position. This chain is 1,4-alpha-glucan branching enzyme GlgB, found in Rhodopseudomonas palustris (strain BisB5).